The sequence spans 465 residues: tRNA-2-methylthio-N(6)-dimethylallyladenosine synthase (465 aa).

One can recognise an MTTase N-terminal domain in the interval 26 to 141 (MRAHIITYGC…LPEALKANER (116 aa)). Residues cysteine 35, cysteine 71, cysteine 104, cysteine 173, cysteine 177, and cysteine 180 each contribute to the [4Fe-4S] cluster site. Residues 159–388 (PKGALSAHVT…IEKQKEWSYR (230 aa)) enclose the Radical SAM core domain. Residues 391-453 (LEWVGKTVEV…PHLLFGEVVG (63 aa)) enclose the TRAM domain.

The protein belongs to the methylthiotransferase family. MiaB subfamily. In terms of assembly, monomer. [4Fe-4S] cluster is required as a cofactor.

Its subcellular location is the cytoplasm. The enzyme catalyses N(6)-dimethylallyladenosine(37) in tRNA + (sulfur carrier)-SH + AH2 + 2 S-adenosyl-L-methionine = 2-methylsulfanyl-N(6)-dimethylallyladenosine(37) in tRNA + (sulfur carrier)-H + 5'-deoxyadenosine + L-methionine + A + S-adenosyl-L-homocysteine + 2 H(+). Catalyzes the methylthiolation of N6-(dimethylallyl)adenosine (i(6)A), leading to the formation of 2-methylthio-N6-(dimethylallyl)adenosine (ms(2)i(6)A) at position 37 in tRNAs that read codons beginning with uridine. This is tRNA-2-methylthio-N(6)-dimethylallyladenosine synthase from Thermus thermophilus (strain ATCC BAA-163 / DSM 7039 / HB27).